We begin with the raw amino-acid sequence, 670 residues long: Probable potassium transport system protein Kup (670 aa).

Residues 1-42 form a disordered region; it reads MSQIPSPNDPPPAGAVPTSGAPAGPSATPAPSPTAGFSLPEH. Residues 15–35 are compositionally biased toward low complexity; it reads AVPTSGAPAGPSATPAPSPTA. 12 helical membrane-spanning segments follow: residues 51-71, 91-111, 144-164, 180-200, 208-228, 254-274, 290-310, 322-342, 380-400, 406-426, 440-460, and 464-484; these read LAALAVGALGVVYGDIGTSPL, VLGVLSLVFWAMTFVVTFKYM, VLLMLGLFGAALLYGDGIITP, PAMERVVVPATVVILVFLFLF, VGAVFGPIMLVWFATIAVLGV, GWHGFLVLGGVVLVITGGEAL, WLGLAMPALLLNYLGQGALLL, LLAPEWALYPTIAIATAAAIV, IYLPEVNWMLGTACVALVLGF, LASAYGIAVTGTMIVTTLLFH, AWPLTVLFLTVDASFFLANVV, and DGGWFPIAAAALVFTLMSTWK.

Belongs to the HAK/KUP transporter (TC 2.A.72) family.

It localises to the cell inner membrane. The catalysed reaction is K(+)(in) + H(+)(in) = K(+)(out) + H(+)(out). Functionally, transport of potassium into the cell. Likely operates as a K(+):H(+) symporter. The sequence is that of Probable potassium transport system protein Kup from Anaeromyxobacter dehalogenans (strain 2CP-C).